Consider the following 243-residue polypeptide: Probable 6-phosphogluconolactonase (243 aa).

The protein belongs to the glucosamine/galactosamine-6-phosphate isomerase family. 6-phosphogluconolactonase subfamily.

The enzyme catalyses 6-phospho-D-glucono-1,5-lactone + H2O = 6-phospho-D-gluconate + H(+). The protein operates within carbohydrate degradation; pentose phosphate pathway; D-ribulose 5-phosphate from D-glucose 6-phosphate (oxidative stage): step 2/3. In terms of biological role, hydrolysis of 6-phosphogluconolactone to 6-phosphogluconate. This is Probable 6-phosphogluconolactonase from Drosophila melanogaster (Fruit fly).